The chain runs to 288 residues: Polyamine aminopropyltransferase (288 aa).

The region spanning Glu-9–Asp-238 is the PABS domain. S-methyl-5'-thioadenosine is bound at residue Gln-33. Spermidine is bound by residues His-64 and Asp-88. S-methyl-5'-thioadenosine is bound by residues Glu-108 and Asp-140–Gly-141. The Proton acceptor role is filled by Asp-158. Asp-158–Asp-161 contributes to the spermidine binding site. Pro-165 provides a ligand contact to S-methyl-5'-thioadenosine.

This sequence belongs to the spermidine/spermine synthase family. As to quaternary structure, homodimer or homotetramer.

Its subcellular location is the cytoplasm. It catalyses the reaction S-adenosyl 3-(methylsulfanyl)propylamine + putrescine = S-methyl-5'-thioadenosine + spermidine + H(+). It functions in the pathway amine and polyamine biosynthesis; spermidine biosynthesis; spermidine from putrescine: step 1/1. Its function is as follows. Catalyzes the irreversible transfer of a propylamine group from the amino donor S-adenosylmethioninamine (decarboxy-AdoMet) to putrescine (1,4-diaminobutane) to yield spermidine. The chain is Polyamine aminopropyltransferase from Escherichia coli (strain UTI89 / UPEC).